The primary structure comprises 818 residues: H(+)/Cl(-) exchange transporter 3 (818 aa).

Residues 1–125 are Cytoplasmic-facing; the sequence is MESEQLFHRG…WEMTKSLYDA (125 aa). 3 consecutive short sequence motifs (di-leucine internalization motif; mediates targeting to late endosome and lysosome membranes) follow at residues 28–29, 46–47, and 71–75; these read LL and LLDLL. The chain crosses the membrane as a helical span at residues 126-163; that stretch reads WSGWLVVTLTGLASGALAGLIDIAADWMTDLKEGICLS. N-linked (GlcNAc...) asparagine glycosylation occurs at N177. A helical transmembrane segment spans residues 209–232; it reads MNYIMYIFWALSFAFLAVSLVKVF. The short motif at 238-242 is the Selectivity filter part_1 element; sequence GSGIP. Residue S239 participates in chloride binding. The segment at residues 241 to 248 is an intramembrane region (helical); sequence IPEIKTIL. Helical transmembrane passes span 258-276 and 282-301; these read GKWT…VASG and EGPL…YLFP. The short motif at 280 to 284 is the Selectivity filter part_2 element; sequence GKEGP. 2 intramembrane regions (helical) span residues 313–325 and 329–337; these read VLSA…VSVA and PIGGVLFSL. The next 3 helical transmembrane spans lie at 349 to 367, 391 to 416, and 423 to 443; these read LWRS…RSIN, FPFI…AWCR, and FGKY…VIAF. N451 and N479 each carry an N-linked (GlcNAc...) asparagine glycan. Helical transmembrane passes span 500-520 and 525-544; these read IWQL…TFGI and GLFI…VGIA. A Selectivity filter part_3 motif is present at residues 525-529; the sequence is GLFIP. Residue F527 participates in chloride binding. Intramembrane regions (helical) lie at residues 572-586 and 590-601; these read GLYA…LGGV and TVSLVVIVFELT. Positions 602 to 605 form an intramembrane region, note=Loop between two helices; the sequence is GGLE. The chain crosses the membrane as a helical span at residues 606–624; sequence YIVPLMAAVMTSKWVGDAF. The Cytoplasmic segment spans residues 625–818; that stretch reads GREGIYEAHI…NQDPASIMFN (194 aa). Y630 contributes to the chloride binding site. CBS domains are found at residues 658–722 and 755–812; these read MRPR…ARKK and LDMS…NQDP. ATP is bound by residues 689–691 and 796–799; these read YNG and TKKD.

The protein belongs to the chloride channel (TC 2.A.49) family. ClC-3/CLCN3 subfamily. As to quaternary structure, monomer and homodimer. Forms heterodimers with CLCN4. Post-translationally, N-glycosylated. As to expression, abundant in brain, especially in the olfactory bulb, hippocampus, and cerebellum. A moderate expression is seen in the lung, kidney and adrenal gland.

It localises to the lysosome membrane. The protein localises to the late endosome membrane. Its subcellular location is the cell membrane. The protein resides in the early endosome membrane. Strongly outwardly rectifying, electrogenic H(+)/Cl(-)exchanger which mediates the exchange of chloride ions against protons. The CLC channel family contains both chloride channels and proton-coupled anion transporters that exchange chloride or another anion for protons. The presence of conserved gating glutamate residues is typical for family members that function as antiporters. Its function is as follows. Strongly outwardly rectifying, electrogenic H(+)/Cl(-)exchanger which mediates the exchange of chloride ions against protons. May play an important role in neuronal cell function through regulation of membrane excitability by protein kinase C. It could help neuronal cells to establish short-term memory. The protein is H(+)/Cl(-) exchange transporter 3 (Clcn3) of Rattus norvegicus (Rat).